Consider the following 157-residue polypeptide: Cell cycle regulator of non-homologous end joining (157 aa).

At Met-1 the chain carries N-acetylmethionine. The KBM signature appears at 1-21 (METLKSKTKTRVLPSWMTAPV). A compositionally biased stretch (basic and acidic residues) spans 80–91 (KPWEQRSLEATD). Residues 80 to 148 (KPWEQRSLEA…EEEKEEEDAL (69 aa)) form a disordered region. A compositionally biased stretch (low complexity) spans 96 to 106 (SPPCSSSPGSS). The XLM signature appears at 147-157 (ALKYVREIFFS).

In terms of assembly, interacts (via KBM motif) with XRCC5/Ku80 and XRCC6/Ku70 heterodimer. Interacts (via XLF motif) with TRIM28/KAP1, ATM, MRE11, NBN and RAD50. Interacts with splicing factor SF3B1. Interacts with ERCC6L2; this interaction is DNA independent.

It is found in the cytoplasm. The protein resides in the nucleus. It localises to the chromosome. Its function is as follows. Cell-cycle-specific regulator of classical non-homologous end joining (NHEJ) of DNA double-strand break (DSB) repair, which can act both as an activator or inhibitor of NHEJ, depending on the cell cycle phase. Acts as a regulator of DNA repair pathway choice by specifically inhibiting classical NHEJ during the S and G2 phases, thereby promoting error-free repair by homologous recombination during cell cycle phases when sister chromatids are present. Preferentially protects single-stranded overhangs at break sites by inhibiting classical NHEJ, thereby creating a local environment that favors homologous recombination. Acts via interaction with XRCC5/Ku80 and XRCC6/Ku70. In contrast, acts as an activator of NHEJ during G1 phase of the cell cycle: promotes classical NHEJ in G1 phase cells via multivalent interactions that increase the affinity of DNA damage response proteins for DSB-associated chromatin. Also involved in immunoglobulin V(D)J recombination. May also act as an indirect regulator of proteasome. The protein is Cell cycle regulator of non-homologous end joining of Mus musculus (Mouse).